We begin with the raw amino-acid sequence, 220 residues long: Deoxyribose-phosphate aldolase (220 aa).

The Proton donor/acceptor role is filled by Asp-89. Residue Lys-151 is the Schiff-base intermediate with acetaldehyde of the active site. Lys-180 functions as the Proton donor/acceptor in the catalytic mechanism.

This sequence belongs to the DeoC/FbaB aldolase family. DeoC type 1 subfamily.

It is found in the cytoplasm. The catalysed reaction is 2-deoxy-D-ribose 5-phosphate = D-glyceraldehyde 3-phosphate + acetaldehyde. Its pathway is carbohydrate degradation; 2-deoxy-D-ribose 1-phosphate degradation; D-glyceraldehyde 3-phosphate and acetaldehyde from 2-deoxy-alpha-D-ribose 1-phosphate: step 2/2. Its function is as follows. Catalyzes a reversible aldol reaction between acetaldehyde and D-glyceraldehyde 3-phosphate to generate 2-deoxy-D-ribose 5-phosphate. In Streptococcus pneumoniae (strain 70585), this protein is Deoxyribose-phosphate aldolase.